A 292-amino-acid chain; its full sequence is tRNA pseudouridine synthase B (292 aa).

The active-site Nucleophile is the Asp-38.

It belongs to the pseudouridine synthase TruB family. Type 1 subfamily.

It catalyses the reaction uridine(55) in tRNA = pseudouridine(55) in tRNA. Responsible for synthesis of pseudouridine from uracil-55 in the psi GC loop of transfer RNAs. The protein is tRNA pseudouridine synthase B of Streptococcus sanguinis (strain SK36).